The following is a 232-amino-acid chain: Ubiquinone biosynthesis O-methyltransferase (232 aa).

S-adenosyl-L-methionine is bound by residues Arg-36, Gly-55, Asp-76, and Met-120.

The protein belongs to the methyltransferase superfamily. UbiG/COQ3 family.

The catalysed reaction is a 3-demethylubiquinol + S-adenosyl-L-methionine = a ubiquinol + S-adenosyl-L-homocysteine + H(+). It carries out the reaction a 3-(all-trans-polyprenyl)benzene-1,2-diol + S-adenosyl-L-methionine = a 2-methoxy-6-(all-trans-polyprenyl)phenol + S-adenosyl-L-homocysteine + H(+). Its pathway is cofactor biosynthesis; ubiquinone biosynthesis. O-methyltransferase that catalyzes the 2 O-methylation steps in the ubiquinone biosynthetic pathway. This chain is Ubiquinone biosynthesis O-methyltransferase, found in Chromobacterium violaceum (strain ATCC 12472 / DSM 30191 / JCM 1249 / CCUG 213 / NBRC 12614 / NCIMB 9131 / NCTC 9757 / MK).